The sequence spans 216 residues: Kynurenine formamidase (216 aa).

A substrate-binding site is contributed by Phe21. Residues His51, His55, and Asp57 each coordinate Zn(2+). His61 functions as the Proton donor/acceptor in the catalytic mechanism. His167 and Glu179 together coordinate Zn(2+).

This sequence belongs to the Cyclase 1 superfamily. KynB family. As to quaternary structure, homodimer. Zn(2+) is required as a cofactor.

It carries out the reaction N-formyl-L-kynurenine + H2O = L-kynurenine + formate + H(+). Its pathway is amino-acid degradation; L-tryptophan degradation via kynurenine pathway; L-kynurenine from L-tryptophan: step 2/2. In terms of biological role, catalyzes the hydrolysis of N-formyl-L-kynurenine to L-kynurenine, the second step in the kynurenine pathway of tryptophan degradation. This Paracidovorax citrulli (strain AAC00-1) (Acidovorax citrulli) protein is Kynurenine formamidase.